The sequence spans 314 residues: Glycerate dehydrogenase (314 aa).

NAD(+) contacts are provided by residues Thr74, 157-158 (AL), 228-230 (TAR), and Asp254. Arg230 is a catalytic residue. Glu259 is an active-site residue. The active-site Proton donor is the His280. An NAD(+)-binding site is contributed by 280-283 (HVAW).

This sequence belongs to the D-isomer specific 2-hydroxyacid dehydrogenase family. As to quaternary structure, homodimer.

The protein localises to the cytoplasm. It catalyses the reaction (R)-glycerate + NAD(+) = 3-hydroxypyruvate + NADH + H(+). The protein operates within one-carbon metabolism; formaldehyde assimilation via serine pathway. Functionally, plays a central role in assimilation of carbon. It converts hydroxypyruvate to glycerate as a key step in the serine cycle, and may also play an important role in C2 reactions, by interconverting glyoxylate and glycolate. The protein is Glycerate dehydrogenase (hprA) of Methylorubrum extorquens (strain ATCC 14718 / DSM 1338 / JCM 2805 / NCIMB 9133 / AM1) (Methylobacterium extorquens).